The primary structure comprises 69 residues: DNA gyrase inhibitor YacG (69 aa).

Residues Cys-13, Cys-16, Cys-32, and Cys-36 each contribute to the Zn(2+) site.

This sequence belongs to the DNA gyrase inhibitor YacG family. In terms of assembly, interacts with GyrB. The cofactor is Zn(2+).

Functionally, inhibits all the catalytic activities of DNA gyrase by preventing its interaction with DNA. Acts by binding directly to the C-terminal domain of GyrB, which probably disrupts DNA binding by the gyrase. The sequence is that of DNA gyrase inhibitor YacG from Neisseria meningitidis serogroup C / serotype 2a (strain ATCC 700532 / DSM 15464 / FAM18).